The chain runs to 705 residues: Translation initiation factor IF-2 (705 aa).

Residues 40-124 (DDQIKALDKK…QPAAPKEIPS (85 aa)) are disordered. A compositionally biased stretch (basic and acidic residues) spans 41-58 (DQIKALDKKFKKEQKNDN). Low complexity predominate over residues 59–77 (KQSTQNNHQKSNNQNQNKG). Basic residues predominate over residues 94 to 108 (KGNKKNNRNNKKNNK). In terms of domain architecture, tr-type G spans 207–376 (ERPAVVTIMG…GLVAEVQELK (170 aa)). Positions 216 to 223 (GHVDHGKT) are G1. 216–223 (GHVDHGKT) provides a ligand contact to GTP. Residues 241 to 245 (GITQH) are G2. The interval 262–265 (DTPG) is G3. Residues 262 to 266 (DTPGH) and 316 to 319 (NKID) each bind GTP. The tract at residues 316–319 (NKID) is G4. The interval 352 to 354 (SAL) is G5.

Belongs to the TRAFAC class translation factor GTPase superfamily. Classic translation factor GTPase family. IF-2 subfamily.

The protein resides in the cytoplasm. In terms of biological role, one of the essential components for the initiation of protein synthesis. Protects formylmethionyl-tRNA from spontaneous hydrolysis and promotes its binding to the 30S ribosomal subunits. Also involved in the hydrolysis of GTP during the formation of the 70S ribosomal complex. This chain is Translation initiation factor IF-2, found in Staphylococcus aureus (strain MSSA476).